We begin with the raw amino-acid sequence, 305 residues long: Oxygen-dependent coproporphyrinogen-III oxidase (305 aa).

Ser98 provides a ligand contact to substrate. Residues His102 and His112 each contribute to the a divalent metal cation site. The active-site Proton donor is the His112. 114-116 lines the substrate pocket; sequence NVR. 2 residues coordinate a divalent metal cation: His151 and His181. The tract at residues 246–281 is important for dimerization; sequence YVEFNLVYDRGTLFGLQSGGRTESILMSMPPLARWE. Substrate is bound at residue 264-266; the sequence is GGR.

Belongs to the aerobic coproporphyrinogen-III oxidase family. In terms of assembly, homodimer. Requires a divalent metal cation as cofactor.

It localises to the cytoplasm. The enzyme catalyses coproporphyrinogen III + O2 + 2 H(+) = protoporphyrinogen IX + 2 CO2 + 2 H2O. Its pathway is porphyrin-containing compound metabolism; protoporphyrin-IX biosynthesis; protoporphyrinogen-IX from coproporphyrinogen-III (O2 route): step 1/1. In terms of biological role, involved in the heme biosynthesis. Catalyzes the aerobic oxidative decarboxylation of propionate groups of rings A and B of coproporphyrinogen-III to yield the vinyl groups in protoporphyrinogen-IX. The protein is Oxygen-dependent coproporphyrinogen-III oxidase of Vibrio parahaemolyticus serotype O3:K6 (strain RIMD 2210633).